The sequence spans 272 residues: Phosphoglycolate phosphatase (272 aa).

Catalysis depends on Asp-19, which acts as the Nucleophile. Positions 19, 21, and 182 each coordinate Mg(2+).

It belongs to the HAD-like hydrolase superfamily. CbbY/CbbZ/Gph/YieH family. Mg(2+) serves as cofactor.

It carries out the reaction 2-phosphoglycolate + H2O = glycolate + phosphate. It participates in organic acid metabolism; glycolate biosynthesis; glycolate from 2-phosphoglycolate: step 1/1. In terms of biological role, specifically catalyzes the dephosphorylation of 2-phosphoglycolate. Is involved in the dissimilation of the intracellular 2-phosphoglycolate formed during the DNA repair of 3'-phosphoglycolate ends, a major class of DNA lesions induced by oxidative stress. In Pseudomonas syringae pv. tomato (strain ATCC BAA-871 / DC3000), this protein is Phosphoglycolate phosphatase.